The following is a 103-amino-acid chain: MLASIPTEHGLYLAAALFILGLIGVLVRRNLIFMLLSLEIMLNATGLAFIVAGARWGEAEGQIMFMLILTLAAAEAAVALALILLVYRRFGTLDADRLSRMRG.

3 helical membrane passes run 7–27 (TEHGLYLAAALFILGLIGVLV), 31–51 (LIFMLLSLEIMLNATGLAFIV), and 65–85 (FMLILTLAAAEAAVALALILL).

This sequence belongs to the complex I subunit 4L family. As to quaternary structure, NDH-1 is composed of 14 different subunits. Subunits NuoA, H, J, K, L, M, N constitute the membrane sector of the complex.

It localises to the cell inner membrane. It carries out the reaction a quinone + NADH + 5 H(+)(in) = a quinol + NAD(+) + 4 H(+)(out). In terms of biological role, NDH-1 shuttles electrons from NADH, via FMN and iron-sulfur (Fe-S) centers, to quinones in the respiratory chain. The immediate electron acceptor for the enzyme in this species is believed to be ubiquinone. Couples the redox reaction to proton translocation (for every two electrons transferred, four hydrogen ions are translocated across the cytoplasmic membrane), and thus conserves the redox energy in a proton gradient. This is NADH-quinone oxidoreductase subunit K from Nitrosococcus oceani (strain ATCC 19707 / BCRC 17464 / JCM 30415 / NCIMB 11848 / C-107).